The primary structure comprises 237 residues: Endonuclease V (237 aa).

Mg(2+) is bound by residues D46 and D114.

This sequence belongs to the endonuclease V family. Requires Mg(2+) as cofactor.

The protein resides in the cytoplasm. It catalyses the reaction Endonucleolytic cleavage at apurinic or apyrimidinic sites to products with a 5'-phosphate.. In terms of biological role, DNA repair enzyme involved in the repair of deaminated bases. Selectively cleaves double-stranded DNA at the second phosphodiester bond 3' to a deoxyinosine leaving behind the intact lesion on the nicked DNA. The protein is Endonuclease V of Xanthomonas axonopodis pv. citri (strain 306).